We begin with the raw amino-acid sequence, 319 residues long: HTH-type transcriptional regulator YidZ (319 aa).

Residues 8–65 (LDLNLLLCLQLLMQERSVTKAAKRMNVTPSAVSKSLSKLRTWFDDPLFVNTPLGLTPT) form the HTH lysR-type domain. Positions 25 to 44 (VTKAAKRMNVTPSAVSKSLS) form a DNA-binding region, H-T-H motif.

Belongs to the LysR transcriptional regulatory family.

Its function is as follows. Involved in anaerobic NO protection. The sequence is that of HTH-type transcriptional regulator YidZ from Citrobacter koseri (strain ATCC BAA-895 / CDC 4225-83 / SGSC4696).